A 162-amino-acid polypeptide reads, in one-letter code: Small ribosomal subunit protein uS13 (162 aa).

Residues 142–162 (RGQRTKSTGRRGSTVGVSRKK) are disordered.

This sequence belongs to the universal ribosomal protein uS13 family. In terms of assembly, part of the 30S ribosomal subunit. Forms a loose heterodimer with protein S19. Forms two bridges to the 50S subunit in the 70S ribosome.

Located at the top of the head of the 30S subunit, it contacts several helices of the 16S rRNA. In the 70S ribosome it contacts the 23S rRNA (bridge B1a) and protein L5 of the 50S subunit (bridge B1b), connecting the 2 subunits; these bridges are implicated in subunit movement. This is Small ribosomal subunit protein uS13 from Methanosarcina mazei (strain ATCC BAA-159 / DSM 3647 / Goe1 / Go1 / JCM 11833 / OCM 88) (Methanosarcina frisia).